The following is a 332-amino-acid chain: MFPPRKFLLSSFILAALHVTAAPLWDAKDPEQLRFITSRCMEDWYPKAKNPKAALQNWLGWKLEPSDDQATQCYTKCVLEKIGFYEPGEKRFKGVRVMQQWETFHKYLNADREKVHDLTSTFDFIPPLKSSSCSEVFEAFKKVNGKHSETIRAILFGKGESSKKYYQEKGVKIKQKEQSLFMHCEALNYPKGSPQRKDLCGIRKYQMGSGIVFERHMECIFKGLRYMTSKNELDVDEIARDFIVVKKKPDAMKAMMKTCKANLKEKNPGKIAVHYYKCLMNDSKVTNDFKEAFDYREVRSKDYFAALTGKLKPYSRSDVRKQVDDIDKIQCS.

Positions 1–21 (MFPPRKFLLSSFILAALHVTA) are cleaved as a signal peptide. Cystine bridges form between Cys-40–Cys-77 and Cys-73–Cys-133. Trp-61 serves as a coordination point for leukotriene E4. Gly-157 and Lys-176 together coordinate leukotriene E4. 3 disulfides stabilise this stretch: Cys-184–Cys-219, Cys-200–Cys-331, and Cys-259–Cys-278. Residues Glu-185, Arg-203, and His-216 each contribute to the noradrenaline site. Residues Asp-294 and Glu-297 each coordinate noradrenaline.

This sequence belongs to the PBP/GOBP family. As to quaternary structure, interacts with human CD4. Saliva (at protein level). Female salivary gland (at protein level). Detected in the head and thorax of the female mosquitoes, where the salivary glands are located.

The protein resides in the secreted. In terms of biological role, modulates blood feeding of female mosquitoes on vertebrate species by binding and sequestering different mediators involved in the host response, such as biogenic amines and eicosanoids. Binds serotonin, histamine, tryptamine, noradrenaline, leukotriene B4, leukotriene C4, leukotriene D4, leukotriene E4 and U-46619, a stable analog of thromboxane A2. Does not bind adrenaline. Exhibits vasodilating activity. Inhibits agonist-induced platelet aggregation but not blood clotting. Functionally, (Microbial infection) Probably promotes Plasmodium gallinaceum oocyst development in mosquito midgut. The protein is Long form salivary protein D7L2 of Aedes aegypti (Yellowfever mosquito).